The chain runs to 567 residues: Proline--tRNA ligase (567 aa).

Belongs to the class-II aminoacyl-tRNA synthetase family. ProS type 1 subfamily. Homodimer.

It is found in the cytoplasm. The catalysed reaction is tRNA(Pro) + L-proline + ATP = L-prolyl-tRNA(Pro) + AMP + diphosphate. In terms of biological role, catalyzes the attachment of proline to tRNA(Pro) in a two-step reaction: proline is first activated by ATP to form Pro-AMP and then transferred to the acceptor end of tRNA(Pro). As ProRS can inadvertently accommodate and process non-cognate amino acids such as alanine and cysteine, to avoid such errors it has two additional distinct editing activities against alanine. One activity is designated as 'pretransfer' editing and involves the tRNA(Pro)-independent hydrolysis of activated Ala-AMP. The other activity is designated 'posttransfer' editing and involves deacylation of mischarged Ala-tRNA(Pro). The misacylated Cys-tRNA(Pro) is not edited by ProRS. The polypeptide is Proline--tRNA ligase (Idiomarina loihiensis (strain ATCC BAA-735 / DSM 15497 / L2-TR)).